The chain runs to 124 residues: Urotensin-2 (124 aa).

The signal sequence occupies residues 1-20 (MYKLASCCLLFIGFLNPLLS). Residues 21–110 (LPLLDSREIS…HLLARIWKPY (90 aa)) constitute a propeptide that is removed on maturation. Residues cysteine 118 and cysteine 123 are joined by a disulfide bond.

Belongs to the urotensin-2 family. Brain specific.

The protein resides in the secreted. Functionally, highly potent vasoconstrictor. This chain is Urotensin-2 (UTS2), found in Homo sapiens (Human).